The following is a 418-amino-acid chain: Calreticulin (418 aa).

The N-terminal stretch at 1 to 17 (MLLPVPLLLGLLGLAAA) is a signal peptide. Positions 18 to 197 (EPVVYFKEQF…NSQVESGSLE (180 aa)) are N-domain. Ca(2+) is bound at residue Gln26. Lys48 bears the N6-acetyllysine mark. Ca(2+)-binding residues include Lys62 and Lys64. The residue at position 64 (Lys64) is an N6-(2-hydroxyisobutyryl)lysine. The cysteines at positions 105 and 137 are disulfide-linked. Positions 109, 111, 128, and 135 each coordinate an alpha-D-glucoside. Residue Lys159 is modified to N6-acetyllysine. A 1-1 repeat occupies 191 to 202 (VESGSLEDDWDF). The segment at 191-255 (VESGSLEDDW…DAKKPEDWDE (65 aa)) is 4 X approximate repeats. Positions 193–277 (SGSLEDDWDF…NPEYKGEWKP (85 aa)) are disordered. The interval 198-308 (DDWDFLPPKK…YSPDANIYAY (111 aa)) is P-domain. Positions 207–251 (KIKDPDASKPEDWDERAKIDDPTDSKPEDWDKPEHIPDPDAKKPE) are enriched in basic and acidic residues. An N6-acetyllysine modification is found at Lys209. A run of 6 repeats spans residues 210–221 (DPDASKPEDWDE), 227–238 (DPTDSKPEDWDK), 244–255 (DPDAKKPEDWDE), 259–269 (GEWEPPVIQNP), 273–283 (GEWKPRQIDNP), and 287–297 (GTWIHPEIDNP). Residues 237–270 (DKPEHIPDPDAKKPEDWDEEMDGEWEPPVIQNPE) form an interaction with PPIB region. Positions 252-261 (DWDEEMDGEW) are enriched in acidic residues. Positions 259 to 297 (GEWEPPVIQNPEYKGEWKPRQIDNPDYKGTWIHPEIDNP) are 3 X approximate repeats. A C-domain region spans residues 309-418 (DSFAVLGLDL…AAAGQAKDEL (110 aa)). Asp317 lines the an alpha-D-glucoside pocket. Asp328 is a Ca(2+) binding site. The tract at residues 349 to 418 (VTKTAEKQMK…AAAGQAKDEL (70 aa)) is disordered. Positions 352 to 379 (TAEKQMKDKQDEEQRLKEEEEEKKRKEE) are enriched in basic and acidic residues. Residues 380–409 (EEAEEDEEDKDDKEDEDEDEEDKDEEEEEA) show a composition bias toward acidic residues. Residues 415 to 418 (KDEL) carry the Prevents secretion from ER motif.

The protein belongs to the calreticulin family. As to quaternary structure, monomer. Component of an EIF2 complex at least composed of CELF1/CUGBP1, CALR, CALR3, EIF2S1, EIF2S2, HSP90B1 and HSPA5. Interacts with PDIA3/ERp57 and SPACA9. Interacts with TRIM21. Interacts with NR3C1. Interacts with PPIB. Interacts (via P-domain) with PDIA5. Interacts with CLCC1.

Its subcellular location is the endoplasmic reticulum lumen. It localises to the cytoplasm. The protein resides in the cytosol. The protein localises to the secreted. It is found in the extracellular space. Its subcellular location is the extracellular matrix. It localises to the cell surface. The protein resides in the sarcoplasmic reticulum lumen. The protein localises to the cytoplasmic vesicle. It is found in the secretory vesicle. Its subcellular location is the cortical granule. It localises to the cytolytic granule. Calcium-binding chaperone that promotes folding, oligomeric assembly and quality control in the endoplasmic reticulum (ER) via the calreticulin/calnexin cycle. This lectin interacts transiently with almost all of the monoglucosylated glycoproteins that are synthesized in the ER. Interacts with the DNA-binding domain of NR3C1 and mediates its nuclear export. Involved in maternal gene expression regulation. May participate in oocyte maturation via the regulation of calcium homeostasis. Present in the cortical granules of non-activated oocytes, is exocytosed during the cortical reaction in response to oocyte activation and might participate in the block to polyspermy. This Oryctolagus cuniculus (Rabbit) protein is Calreticulin (CALR).